We begin with the raw amino-acid sequence, 473 residues long: Cannabinoid receptor 1 (473 aa).

Residues 1-118 (MKSILDGLAD…CFMILTASQQ (118 aa)) are Extracellular-facing. The segment at 2–23 (KSILDGLADTTFRTITTDLLYM) is required for mitochondrial localization. Residues N79 and N85 are each glycosylated (N-linked (GlcNAc...) asparagine). A helical transmembrane segment spans residues 119–144 (LIIAVLSLTLGTFTVLENFLVLCVIL). Topologically, residues 145–156 (QSRTLRCRPSYH) are cytoplasmic. The helical transmembrane segment at 157–177 (FIGSLAVADLLGSVIFVYSFL) threads the bilayer. Residues 178–189 (DFHVFHRKDSSN) are Extracellular-facing. A helical transmembrane segment spans residues 190 to 214 (VFLFKLGGVTASFTASVGSLFLTAI). Residues 215 to 234 (DRYISIHRPLAYKRIVTRTK) lie on the Cytoplasmic side of the membrane. Residues 235 to 257 (AVIAFCVMWTIAIIIAVLPLLGW) form a helical membrane-spanning segment. Over 258-275 (NCKKLKSVCSDIFPLIDE) the chain is Extracellular. Residues 276 to 301 (NYLMFWIGVTSILLLFIVYAYVYILW) form a helical membrane-spanning segment. The Cytoplasmic segment spans residues 302–346 (KAHSHAVRMLQRGTQKSIIIHTSEDGKVQITRPEQTRMDIRLAKT). The helical transmembrane segment at 347–367 (LVLILVVLIICWGPLLAIMVY) threads the bilayer. Residues 368–379 (DVFGKMNNPIKT) are Extracellular-facing. The helical transmembrane segment at 380 to 401 (VFAFCSMLCLMDSTVNPIIYAL) threads the bilayer. Residues 402–473 (RSQDLRHAFL…VSTETSGEAV (72 aa)) lie on the Cytoplasmic side of the membrane. A lipid anchor (S-palmitoyl cysteine) is attached at C417.

The protein belongs to the G-protein coupled receptor 1 family. Palmitoylation at Cys-417 is important for recruitment at both plasma membrane and lipid rafts and association with G protein alpha subunits.

It is found in the cell membrane. The protein resides in the mitochondrion outer membrane. Its subcellular location is the cell projection. The protein localises to the axon. It localises to the presynapse. Its activity is regulated as follows. Hemopressin, a peptide derived from hemoglobin subunit alpha (HBA1 and/or HBA2), acts as an antagonist peptide: hemopressin-binding efficiently blocks cannabinoid receptor CNR1 and subsequent signaling. G-protein coupled receptor for cannabinoids. Mediates many cannabinoid-induced effects in the central nervous system (CNS), as well as in peripheral tissues. Regulates cellular respiration and energy production in response to cannabinoids. Signaling typically involves reduction in cyclic AMP. The sequence is that of Cannabinoid receptor 1 (CNR1) from Taricha granulosa (Roughskin newt).